A 463-amino-acid polypeptide reads, in one-letter code: Minor capsid protein L2 (463 aa).

Residues 1-12 carry the Nuclear localization signal motif; it reads MVSHTHKRRKRA. A disulfide bridge links cysteine 21 with cysteine 27. Residues 444–452 carry the Nuclear localization signal motif; that stretch reads HLGKRRKRF.

It belongs to the papillomaviridae L2 protein family. In terms of assembly, interacts with major capsid protein L1. Interacts with E2; this interaction inhibits E2 transcriptional activity but not the DNA replication function E2. Interacts with host GADD45GIP1. Interacts with host HSPA8; this interaction is required for L2 nuclear translocation. Interacts with host importins KPNB2 and KPNB3. Forms a complex with importin alpha2-beta1 heterodimers via interaction with the importin alpha2 adapter. Interacts with host DYNLT1; this interaction is essential for virus intracellular transport during entry. Interacts (via C-terminus) with host retromer subunits VPS35 and VPS29. In terms of processing, highly phosphorylated.

It is found in the virion. The protein localises to the host nucleus. Its subcellular location is the host early endosome. It localises to the host Golgi apparatus. Minor protein of the capsid that localizes along the inner surface of the virion, within the central cavities beneath the L1 pentamers. Plays a role in capsid stabilization through interaction with the major capsid protein L1. Once the virion enters the host cell, L2 escorts the genomic DNA into the nucleus by promoting escape from the endosomal compartments and traffic through the host Golgi network. Mechanistically, the C-terminus of L2 possesses a cell-penetrating peptide that protudes from the host endosome, interacts with host cytoplasmic retromer cargo and thereby mediates the capsid delivery to the host trans-Golgi network. Plays a role through its interaction with host dynein in the intracellular microtubule-dependent transport of viral capsid toward the nucleus. Mediates the viral genome import into the nucleus through binding to host importins. Once within the nucleus, L2 localizes viral genomes to host PML bodies in order to activate early gene expression for establishment of infection. Later on, promotes late gene expression by interacting with the viral E2 protein and by inhibiting its transcriptional activation functions. During virion assembly, encapsidates the genome by direct interaction with the viral DNA. The chain is Minor capsid protein L2 from Homo sapiens (Human).